Consider the following 276-residue polypeptide: Light-independent protochlorophyllide reductase iron-sulfur ATP-binding protein (276 aa).

ATP contacts are provided by residues 12–17 (GIGKST) and lysine 41. Serine 16 is a binding site for Mg(2+). Residues cysteine 97 and cysteine 131 each contribute to the [4Fe-4S] cluster site. 182 to 183 (NR) is an ATP binding site.

This sequence belongs to the NifH/BchL/ChlL family. As to quaternary structure, homodimer. Protochlorophyllide reductase is composed of three subunits; BchL, BchN and BchB. Requires [4Fe-4S] cluster as cofactor.

The catalysed reaction is chlorophyllide a + oxidized 2[4Fe-4S]-[ferredoxin] + 2 ADP + 2 phosphate = protochlorophyllide a + reduced 2[4Fe-4S]-[ferredoxin] + 2 ATP + 2 H2O. Its pathway is porphyrin-containing compound metabolism; bacteriochlorophyll biosynthesis (light-independent). In terms of biological role, component of the dark-operative protochlorophyllide reductase (DPOR) that uses Mg-ATP and reduced ferredoxin to reduce ring D of protochlorophyllide (Pchlide) to form chlorophyllide a (Chlide). This reaction is light-independent. The L component serves as a unique electron donor to the NB-component of the complex, and binds Mg-ATP. The chain is Light-independent protochlorophyllide reductase iron-sulfur ATP-binding protein from Chlorobium luteolum (strain DSM 273 / BCRC 81028 / 2530) (Pelodictyon luteolum).